The sequence spans 380 residues: Cytochrome b (380 aa).

Helical transmembrane passes span 34–54 (FGSLLGICLMTQILTGLLLAM), 78–99 (WLIRNLHANGASFFFICIYLHI), 114–134 (WNTGIILLLTLMATAFVGYVL), and 179–199 (FFALHFLLPFAIAGLTLIHLT). The heme b site is built by His-84 and His-98. Heme b-binding residues include His-183 and His-197. A ubiquinone is bound at residue His-202. 4 helical membrane passes run 227 to 247 (LKDILGFTLMVLPLTSLALFS), 289 to 309 (LGGVLALAASVLVLFLSPFLH), 321 to 341 (LSQLLFWILVTNLFILTWVGS), and 348 to 368 (FIIIGQLASITYFTILLILFP).

Belongs to the cytochrome b family. In terms of assembly, the cytochrome bc1 complex contains 11 subunits: 3 respiratory subunits (MT-CYB, CYC1 and UQCRFS1), 2 core proteins (UQCRC1 and UQCRC2) and 6 low-molecular weight proteins (UQCRH/QCR6, UQCRB/QCR7, UQCRQ/QCR8, UQCR10/QCR9, UQCR11/QCR10 and a cleavage product of UQCRFS1). This cytochrome bc1 complex then forms a dimer. Heme b serves as cofactor.

Its subcellular location is the mitochondrion inner membrane. Component of the ubiquinol-cytochrome c reductase complex (complex III or cytochrome b-c1 complex) that is part of the mitochondrial respiratory chain. The b-c1 complex mediates electron transfer from ubiquinol to cytochrome c. Contributes to the generation of a proton gradient across the mitochondrial membrane that is then used for ATP synthesis. The protein is Cytochrome b (MT-CYB) of Macronectes halli (Hall's giant petrel).